Here is a 191-residue protein sequence, read N- to C-terminus: Ribosome maturation factor RimP (191 aa).

Belongs to the RimP family.

Its subcellular location is the cytoplasm. Its function is as follows. Required for maturation of 30S ribosomal subunits. The chain is Ribosome maturation factor RimP from Caulobacter vibrioides (strain NA1000 / CB15N) (Caulobacter crescentus).